A 51-amino-acid chain; its full sequence is MEKNNEVINSIQEVSLEELDQIIGAGKNGVFKTISHECHLNTWAFLATCCS.

A propeptide spanning residues 1–25 (MEKNNEVINSIQEVSLEELDQIIGA) is cleaved from the precursor. 2 cross-links (beta-methyllanthionine (Thr-Cys)) span residues 33–38 (TISHEC) and 42–50 (TWAFLATCC). The lanthionine (Ser-Cys) cross-link spans 35-49 (SHECHLNTWAFLATC). Thr48 carries the post-translational modification 2,3-didehydrobutyrine.

It belongs to the type A lantibiotic family. Post-translationally, maturation of lantibiotics involves the enzymatic conversion of Thr, and Ser into dehydrated AA and the formation of thioether bonds with cysteine. This is followed by membrane translocation and cleavage of the modified precursor.

The protein localises to the secreted. It localises to the cell surface. In terms of biological role, lanthionine-containing peptide antibiotic (lantibiotic) active on certain Gram-positive bacteria. The bactericidal activity of lantibiotics is based on depolarization of energized bacterial cytoplasmic membranes, initiated by the formation of aqueous transmembrane pores. This chain is Lantibiotic streptococcin A-FF22 (scnA), found in Streptococcus pyogenes.